The chain runs to 571 residues: Zinc finger protein 181 (571 aa).

The region spanning 4 to 76 is the KRAB domain; it reads VTFNDVAIDF…EKKLSKGMIP (73 aa). Glycyl lysine isopeptide (Lys-Gly) (interchain with G-Cter in SUMO2) cross-links involve residues Lys109 and Lys126. 11 C2H2-type zinc fingers span residues 237 to 259, 265 to 287, 293 to 315, 321 to 343, 349 to 371, 377 to 399, 405 to 427, 433 to 455, 461 to 483, 489 to 511, and 517 to 539; these read YTCS…WRIH, YECR…LISH, YKCI…QSTH, YECM…LRIH, YECR…QKIH, YECR…QRIH, YECN…QSIH, FECQ…LRNH, YECS…HRIH, YECI…QRIH, and YKCN…QRVH.

It belongs to the krueppel C2H2-type zinc-finger protein family.

It is found in the nucleus. May be involved in transcriptional regulation. The protein is Zinc finger protein 181 (ZNF181) of Homo sapiens (Human).